The sequence spans 43 residues: Iota-conotoxin-like Fi11.6 (43 aa).

Cystine bridges form between cysteine 2–cysteine 16, cysteine 9–cysteine 19, cysteine 15–cysteine 24, and cysteine 18–cysteine 35. At proline 8 the chain carries 4-hydroxyproline. Proline 26 bears the 4-hydroxyproline mark. The residue at position 30 (tryptophan 30) is a 6'-bromotryptophan. Residue phenylalanine 41 is modified to D-phenylalanine.

This sequence belongs to the conotoxin I1 superfamily. Expressed by the venom duct.

The protein resides in the secreted. Its function is as follows. Iota-conotoxins bind to voltage-gated sodium channels (Nav) and act as agonists by shifting the voltage-dependence of activation to more hyperpolarized levels. Produces general excitatory symptoms. The sequence is that of Iota-conotoxin-like Fi11.6 from Conus figulinus (Fig cone).